The following is a 1292-amino-acid chain: Zinc finger CCCH domain-containing protein 44 (1292 aa).

Positions 1 to 10 (MENQQKQLQQ) are enriched in polar residues. Disordered regions lie at residues 1–24 (MENQ…REES) and 72–107 (IDEA…KKED). A PHD-type zinc finger spans residues 110-176 (EDVCFICFDG…SYMCYTCTFS (67 aa)). Disordered stretches follow at residues 256-313 (PWKE…LKKA) and 401-426 (KGAK…VHDP). An SWIB/MDM2 domain is found at 313-396 (APGDTSWATK…LKLLESHVLI (84 aa)). Polar residues predominate over residues 404-414 (KTTNGETTHAV). Positions 453 to 586 (AIDVHNINLI…TAATLQAMRI (134 aa)) constitute a Plus3 domain. Disordered regions lie at residues 624-731 (PEVH…TQGP), 777-832 (TTLP…SNDP), 876-915 (DVRE…INGS), and 1170-1245 (TTVE…HNNR). Positions 661–675 (QNKGVNLNNVGNNVQ) are enriched in low complexity. Basic and acidic residues predominate over residues 689-698 (VHADKDDCSK). The span at 699 to 708 (VHNNSSNIQE) shows a compositional bias: polar residues. One can recognise a GYF domain in the interval 716-770 (SEIWHYRDPTGKTQGPFSMVQLRRWKSSGHFPPYLRIWRAHENQDESVLLTDALA). Positions 813–829 (VNTSATSSSSSTVTAHS) are enriched in low complexity. Composition is skewed to polar residues over residues 882 to 899 (GTDQ…NTTK) and 906 to 915 (NGGSVSINGS). Composition is skewed to low complexity over residues 1188-1206 (SSEP…SARG) and 1231-1244 (NNGH…SHNN). The segment at 1267–1292 (PKGLKICKFYESGYCKRGASCSFWHP) adopts a C3H1-type zinc-finger fold.

This chain is Zinc finger CCCH domain-containing protein 44, found in Arabidopsis thaliana (Mouse-ear cress).